The sequence spans 244 residues: Carboxy-S-adenosyl-L-methionine synthase (244 aa).

S-adenosyl-L-methionine is bound by residues Y41, 66-68 (GCS), 91-92 (DN), 119-120 (DI), N134, and R201.

Belongs to the class I-like SAM-binding methyltransferase superfamily. Cx-SAM synthase family. In terms of assembly, homodimer.

The enzyme catalyses prephenate + S-adenosyl-L-methionine = carboxy-S-adenosyl-L-methionine + 3-phenylpyruvate + H2O. Its function is as follows. Catalyzes the conversion of S-adenosyl-L-methionine (SAM) to carboxy-S-adenosyl-L-methionine (Cx-SAM). The chain is Carboxy-S-adenosyl-L-methionine synthase from Photobacterium profundum (strain SS9).